The primary structure comprises 1040 residues: Multidrug resistance protein MdtB (1040 aa).

A run of 12 helical transmembrane segments spans residues 16–36, 347–367, 369–389, 396–416, 440–460, 472–492, 537–557, 863–883, 888–908, 911–931, 968–988, and 998–1018; these read FIMR…AGII, LMMA…NIPA, IIPG…MVFL, LTLM…IVVI, IGFT…PLLF, FAIT…TLTP, WLTL…WVFI, LGST…VLGI, FIHP…ALLA, IAGS…IGIV, ILMT…STGV, and IGMV…TPVI.

The protein belongs to the resistance-nodulation-cell division (RND) (TC 2.A.6) family. MdtB subfamily. Part of a tripartite efflux system composed of MdtA, MdtB and MdtC. MdtB forms a heteromultimer with MdtC.

The protein localises to the cell inner membrane. Its function is as follows. The MdtABC tripartite complex confers resistance against novobiocin and deoxycholate. The chain is Multidrug resistance protein MdtB from Escherichia coli O8 (strain IAI1).